The sequence spans 236 residues: Lectin CPL (236 aa).

Residues Glu-8 and Asp-10 each coordinate Mn(2+). Ca(2+) is bound by residues Asp-10, Tyr-12, Asn-14, and Asp-19. Residue Asn-14 participates in a carbohydrate binding. Mn(2+) is bound by residues Asp-19 and His-24. Residues 99–100 (VY), Asp-207, and Arg-227 each bind a carbohydrate.

The protein belongs to the leguminous lectin family. As to quaternary structure, homotetramer; dimer of dimers. Concanavalin A-like lectins of the Diocleinae subtribe undergo proteolytic processing referred to as circular permutation. The propeptide is split into an N-terminal and a C-terminal part, the gamma and beta chain, respectively. These are then religated in beta-gamma order to form the mature alpha chain. The beta and gamma chains can often be detected in cell extracts. Residues 1-118 of the mature chain, as displayed here, probably constitute the beta chain in the propeptide, residues 119-236 the gamma chain.

In terms of biological role, D-mannose/D-glucose-binding lectin that also binds derivative alpha-methyl-D-mannppyranoside. Has hemagglutinating activity towards rabbit erythrocytes. In Bionia pedicellata (Camptosema pedicellatum), this protein is Lectin CPL.